The chain runs to 156 residues: Low-salt glycan biosynthesis protein Agl8 (156 aa).

Residues 14 to 15 (RI) and R47 contribute to the substrate site. Residues 25-156 (ANVPLVSVDL…YVERYLDALD (132 aa)) form the Nudix hydrolase domain. 3 residues coordinate Mg(2+): G60, E80, and Q130. The short motif at 61–82 (GTVFKNETLTDALYRVADEELG) is the Nudix box element.

Belongs to the Nudix hydrolase family. It depends on Mg(2+) as a cofactor.

Its pathway is protein modification; protein glycosylation. It participates in cell surface structure biogenesis; S-layer biogenesis. Its function is as follows. Nudix hydrolase involved in N-glycan biosynthetic pathway that takes place under low-salt conditions (1.75 M instead of 3.4 M). Participates in the formation of the tetrasaccharide present at 'Asn-532' of S-layer glycoprotein Csg, consisting of a sulfated hexose, 2 hexoses and rhamnose. Mediates attachment of sugar 3 in the tetrasaccharide. This Haloferax volcanii (strain ATCC 29605 / DSM 3757 / JCM 8879 / NBRC 14742 / NCIMB 2012 / VKM B-1768 / DS2) (Halobacterium volcanii) protein is Low-salt glycan biosynthesis protein Agl8 (agl8).